The primary structure comprises 375 residues: Putative monooxygenase Rv1533 (375 aa).

FMN is bound by residues Gln190, Gly195, Gly224, and 243 to 246; that span reads WCGS.

Belongs to the nitronate monooxygenase family. FMN serves as cofactor.

The sequence is that of Putative monooxygenase Rv1533 from Mycobacterium tuberculosis (strain ATCC 25618 / H37Rv).